Reading from the N-terminus, the 659-residue chain is Exoribonuclease 2 (659 aa).

In terms of domain architecture, RNB spans R189–N532. The S1 motif domain occupies N576 to L658.

It belongs to the RNR ribonuclease family. RNase II subfamily.

It localises to the cytoplasm. It carries out the reaction Exonucleolytic cleavage in the 3'- to 5'-direction to yield nucleoside 5'-phosphates.. Its function is as follows. Involved in mRNA degradation. Hydrolyzes single-stranded polyribonucleotides processively in the 3' to 5' direction. This is Exoribonuclease 2 from Glaesserella parasuis serovar 5 (strain SH0165) (Haemophilus parasuis).